The primary structure comprises 355 residues: MSFDVLTINPGSTSTKLAVYQGDKVLFEETVRHTMQELADFNNVQEQFDFRWQVLRRVMDAHGYDVKNLQAVVGRGGLLRPVAGGTYMVTEKMIDDLKENKYGEHASNLGAMLAKKLADELTIPSFIVDPVVVDEMQEIARISGNAFVARKSIFHALNHKAAGRKIAKELGNDYEKMNFVIAHLGGGISVAAHRQGRVVDVNNALDGDGPFSPERSGSLPMNDFLEACFSGKWTKRELHELIVGRGGMISYLGTNSMLEVEAKVQAGDVKAMEAFDAMAYQVSKEIGACSVVLQGKIDAIILTGGLARSELFTSKIIEQTNWITSVIIEPGEDELEALNSGVQRVLAGLEKEKEY.

The protein belongs to the acetokinase family.

The protein localises to the cytoplasm. The enzyme catalyses butanoate + ATP = butanoyl phosphate + ADP. This Listeria monocytogenes serotype 4a (strain HCC23) protein is Probable butyrate kinase.